Consider the following 461-residue polypeptide: MNIDKNLLEKWDKEYIWHPYTQMKEYRESKNLIIERGEGNYLIDIYGNKYLDAVSSIWCNLFGHSRKEIIEAIKNQADKICHSTLLGCGNVPSILLAKKLVDITPKHLTKVFYSEDGAEAVEIAIKMAYQYYVLRGDKGRTKFISVKEGYHGDTVGAMSVGGSELFHGVFKPLLFKGYHANPPYCYRCKYHNFKDTDERNEKGCEMECLNEMISLIEKHAEEVFCVILEGGIMGSAGMIPYPDGYIEGVAKACKENDVIFILDEVATGFGRTGKMFFCDNEELKKLEKPDILCLGKGLTGGYLPLAATLTTDEIYNQFLGEFGESKQLYHGHTYTGNQLLCSAALATLEIFEKENVIENIQPKIKLFHKELRKLKELEHVGDVRGRGFMVGIELVKDKETKEPYPYGYKAGYRVAEKLLEKGIYMRPIGNVIILVPPLSITEKEIIYLCDALYEAIKEADL.

117–118 contacts pyridoxal 5'-phosphate; the sequence is GA. Residue tyrosine 150 coordinates substrate. Aspartate 263 serves as a coordination point for pyridoxal 5'-phosphate. Substrate is bound by residues lysine 296, glycine 331, and arginine 426. Lysine 296 is subject to N6-(pyridoxal phosphate)lysine.

This sequence belongs to the class-III pyridoxal-phosphate-dependent aminotransferase family. BioA subfamily. As to quaternary structure, homodimer. It depends on pyridoxal 5'-phosphate as a cofactor.

It is found in the cytoplasm. The catalysed reaction is (8S)-8-amino-7-oxononanoate + S-adenosyl-L-methionine = S-adenosyl-4-methylsulfanyl-2-oxobutanoate + (7R,8S)-7,8-diammoniononanoate. It functions in the pathway cofactor biosynthesis; biotin biosynthesis; 7,8-diaminononanoate from 8-amino-7-oxononanoate (SAM route): step 1/1. Functionally, catalyzes the transfer of the alpha-amino group from S-adenosyl-L-methionine (SAM) to 7-keto-8-aminopelargonic acid (KAPA) to form 7,8-diaminopelargonic acid (DAPA). It is the only aminotransferase known to utilize SAM as an amino donor. The polypeptide is Adenosylmethionine-8-amino-7-oxononanoate aminotransferase (Methanocaldococcus jannaschii (strain ATCC 43067 / DSM 2661 / JAL-1 / JCM 10045 / NBRC 100440) (Methanococcus jannaschii)).